A 688-amino-acid chain; its full sequence is Homoaconitase, mitochondrial (688 aa).

The transit peptide at 1–19 (MALLYLSTRSSLKKTGARC) directs the protein to the mitochondrion. [4Fe-4S] cluster-binding residues include cysteine 346, cysteine 406, and cysteine 409.

Belongs to the aconitase/IPM isomerase family. [4Fe-4S] cluster is required as a cofactor.

It is found in the mitochondrion. The catalysed reaction is (2R,3S)-homoisocitrate = cis-homoaconitate + H2O. It functions in the pathway amino-acid biosynthesis; L-lysine biosynthesis via AAA pathway; L-alpha-aminoadipate from 2-oxoglutarate: step 3/5. In terms of biological role, catalyzes the reversible hydration of cis-homoaconitate to (2R,3S)-homoisocitrate, a step in the alpha-aminoadipate pathway for lysine biosynthesis. The protein is Homoaconitase, mitochondrial (LYS4) of Debaryomyces hansenii (strain ATCC 36239 / CBS 767 / BCRC 21394 / JCM 1990 / NBRC 0083 / IGC 2968) (Yeast).